The following is a 214-amino-acid chain: RNA-binding protein 38 (214 aa).

The 78-residue stretch at 11–88 folds into the RRM domain; sequence TKIFVGGLPY…RKANVNLAYL (78 aa).

Belongs to the RBM38 family. Strongly expressed in the nervous system. Expressed at early neurula stages of development.

The protein resides in the cytoplasm. The protein localises to the cytosol. It is found in the nucleus. RNA-binding protein that specifically bind the 3'-UTR of VegT transcripts, leading to maintain their stability and stimulate their translation, thereby playing a role in germ layer formation. VegT is a localized maternal determinant essentially required for endoderm formation. Also has some proneural function in the open neural plate and in the context of retinogenesis. May also act as a mRNA splicing factor. May play a role in myogenic differentiation. The polypeptide is RNA-binding protein 38 (rbm38) (Xenopus laevis (African clawed frog)).